The chain runs to 374 residues: Anhydro-N-acetylmuramic acid kinase (374 aa).

An ATP-binding site is contributed by Gly-12 to Asp-19.

It belongs to the anhydro-N-acetylmuramic acid kinase family.

The enzyme catalyses 1,6-anhydro-N-acetyl-beta-muramate + ATP + H2O = N-acetyl-D-muramate 6-phosphate + ADP + H(+). It functions in the pathway amino-sugar metabolism; 1,6-anhydro-N-acetylmuramate degradation. Its pathway is cell wall biogenesis; peptidoglycan recycling. In terms of biological role, catalyzes the specific phosphorylation of 1,6-anhydro-N-acetylmuramic acid (anhMurNAc) with the simultaneous cleavage of the 1,6-anhydro ring, generating MurNAc-6-P. Is required for the utilization of anhMurNAc either imported from the medium or derived from its own cell wall murein, and thus plays a role in cell wall recycling. In Sodalis glossinidius (strain morsitans), this protein is Anhydro-N-acetylmuramic acid kinase.